We begin with the raw amino-acid sequence, 123 residues long: NHL-repeat-containing protein 4 (123 aa).

NHL repeat units follow at residues 35–78 (QPLG…FPRA) and 79–119 (GPPI…YQGL).

The chain is NHL-repeat-containing protein 4 (NHLRC4) from Homo sapiens (Human).